A 92-amino-acid polypeptide reads, in one-letter code: Beta-2-microglobulin (92 aa).

The Ig-like C1-type domain maps to 2 to 91 (PQIQVYTRHP…VSMKEPKTVN (90 aa)). Cysteines 22 and 77 form a disulfide.

The protein belongs to the beta-2-microglobulin family. As to quaternary structure, heterodimer of an alpha chain and a beta chain. Beta-2-microglobulin is the beta-chain of major histocompatibility complex class I molecules.

The protein resides in the secreted. In terms of biological role, component of the class I major histocompatibility complex (MHC). Involved in the presentation of peptide antigens to the immune system. This chain is Beta-2-microglobulin (B2m), found in Mus caroli (Ryukyu mouse).